Here is a 155-residue protein sequence, read N- to C-terminus: Ribonuclease H (155 aa).

The RNase H type-1 domain maps to 4–145 (NISKVVIYTD…ADKLAAQGRQ (142 aa)). Mg(2+) contacts are provided by aspartate 13, glutamate 51, aspartate 73, and aspartate 137.

Belongs to the RNase H family. As to quaternary structure, monomer. Mg(2+) serves as cofactor.

The protein localises to the cytoplasm. It carries out the reaction Endonucleolytic cleavage to 5'-phosphomonoester.. Functionally, endonuclease that specifically degrades the RNA of RNA-DNA hybrids. The sequence is that of Ribonuclease H from Rickettsia canadensis (strain McKiel).